Here is a 236-residue protein sequence, read N- to C-terminus: 7-cyano-7-deazaguanine synthase (236 aa).

7–17 (CSGGLDSVSLA) contributes to the ATP binding site. Zn(2+) contacts are provided by C185, C193, C196, and C199.

Belongs to the QueC family. Zn(2+) serves as cofactor.

The enzyme catalyses 7-carboxy-7-deazaguanine + NH4(+) + ATP = 7-cyano-7-deazaguanine + ADP + phosphate + H2O + H(+). Its pathway is purine metabolism; 7-cyano-7-deazaguanine biosynthesis. Catalyzes the ATP-dependent conversion of 7-carboxy-7-deazaguanine (CDG) to 7-cyano-7-deazaguanine (preQ(0)). This chain is 7-cyano-7-deazaguanine synthase, found in Agrobacterium fabrum (strain C58 / ATCC 33970) (Agrobacterium tumefaciens (strain C58)).